Here is a 168-residue protein sequence, read N- to C-terminus: Photosystem I assembly protein Ycf3 (168 aa).

3 TPR repeats span residues 35-68 (AFTY…EIDP), 72-105 (SYIL…NPFL), and 120-153 (GEQA…TPGN).

The protein belongs to the Ycf3 family.

It is found in the plastid. The protein resides in the chloroplast thylakoid membrane. In terms of biological role, essential for the assembly of the photosystem I (PSI) complex. May act as a chaperone-like factor to guide the assembly of the PSI subunits. The sequence is that of Photosystem I assembly protein Ycf3 from Coffea arabica (Arabian coffee).